Here is a 427-residue protein sequence, read N- to C-terminus: UPF0229 protein YeaH (427 aa).

Basic and acidic residues predominate over residues 79–90 (NDHFVQNDRIER). The segment at 79 to 110 (NDHFVQNDRIERPQGGGGGSGSGQGQASQDGE) is disordered. Residues 92–102 (QGGGGGSGSGQ) are compositionally biased toward gly residues.

Belongs to the UPF0229 family.

This is UPF0229 protein YeaH from Escherichia coli O9:H4 (strain HS).